The chain runs to 265 residues: Undecaprenyl-diphosphatase 1 (265 aa).

7 helical membrane passes run 4–24, 42–62, 84–104, 108–128, 184–204, 217–237, and 245–265; these read IIIAFILGIVEGLAEFLPISS, AKTFEIVIQLGAILAIAILYH, FHVFLGVFPAVVAGLLLHDVI, LFQPYTVVIGLVAGAILMIFA, SEFSFLIALPVMVGATGLDLL, MFAVGFITSFIVAMLAVVTFL, and LKPFAYYRILLAILFTVFVLL.

This sequence belongs to the UppP family.

It is found in the cell membrane. It carries out the reaction di-trans,octa-cis-undecaprenyl diphosphate + H2O = di-trans,octa-cis-undecaprenyl phosphate + phosphate + H(+). Functionally, catalyzes the dephosphorylation of undecaprenyl diphosphate (UPP). Confers resistance to bacitracin. The polypeptide is Undecaprenyl-diphosphatase 1 (Bacillus thuringiensis (strain Al Hakam)).